A 92-amino-acid polypeptide reads, in one-letter code: C-C motif chemokine 4 (92 aa).

A signal peptide spans 1–23 (MKLGVTVLSVALLVAALCPPALS). 2 cysteine pairs are disulfide-bonded: Cys34-Cys58 and Cys35-Cys74.

This sequence belongs to the intercrine beta (chemokine CC) family. As to quaternary structure, homodimer.

Its subcellular location is the secreted. Monokine with inflammatory and chemokinetic properties. This chain is C-C motif chemokine 4 (CCL4), found in Oryctolagus cuniculus (Rabbit).